We begin with the raw amino-acid sequence, 20 residues long: Apidaecin 2+ (20 aa).

Positions 1-13 are enriched in pro residues; it reads GKPNKPRPAPIKP. Residues 1–20 are disordered; sequence GKPNKPRPAPIKPRPPHPRL.

The protein resides in the secreted. In terms of biological role, antimicrobial peptide active against many Gram-negative enterobacterial and plant-associated bacterial species. Not active against other bacterial species like H.pylori, P.mirabilis, B.pertussis or N.gonorrhoeae. The protein is Apidaecin 2+ of Pimpla disparis (Parasitic wasp).